Here is a 2236-residue protein sequence, read N- to C-terminus: uncharacterized protein (2236 aa).

Spectrin repeat units lie at residues 46–146 and 238–335; these read QVYL…RQLE and QKFV…TDIE. 2 coiled-coil regions span residues 496-541 and 603-631; these read VVEQ…TVNS and DDQQKNMANEELRKTYENLKKIEMEVGRQ. 5 Spectrin repeats span residues 839 to 949, 1048 to 1146, 1261 to 1361, 1367 to 1459, and 1562 to 1667; these read YEYD…KTLK, KKLE…KRME, LGAE…VDLN, ILID…KSLA, and QKVV…NRLE. A coiled-coil region spans residues 1835 to 1869; it reads QNSTDAEKKLSLVSERLNALKKQLDLLAEKIAVDD. 2 EF-hand domains span residues 2104–2139 and 2141–2176; these read KQLHEFELAFDYFDRERNGWLDYKHFELCLKSQGYN and SAENTLKETMTLLDPSTTGHIQKHDYVRYMVKHETT. Ca(2+)-binding residues include D2154, S2156, T2158, H2160, and D2165.

The protein belongs to the spectrin family.

This is an uncharacterized protein from Caenorhabditis elegans.